Reading from the N-terminus, the 565-residue chain is UvrABC system protein C (565 aa).

The GIY-YIG domain maps to 12–89; the sequence is EEPGVYIFKN…IRTHKPKYNV (78 aa). Residues 195-230 enclose the UVR domain; sequence KDVLPTLYEKIEQYASNLAFEKAAFLRDQVLVLQNI.

It belongs to the UvrC family. Interacts with UvrB in an incision complex.

Its subcellular location is the cytoplasm. In terms of biological role, the UvrABC repair system catalyzes the recognition and processing of DNA lesions. UvrC both incises the 5' and 3' sides of the lesion. The N-terminal half is responsible for the 3' incision and the C-terminal half is responsible for the 5' incision. The chain is UvrABC system protein C from Hydrogenobaculum sp. (strain Y04AAS1).